A 372-amino-acid chain; its full sequence is Germination protease (372 aa).

Residues 1 to 15 (MNRSIDLSMYSVRTD) constitute a propeptide that is removed on maturation.

Belongs to the peptidase A25 family. In terms of assembly, homotetramer. Autoproteolytically processed. The inactive tetrameric zymogen termed p46 autoprocesses to a smaller form termed p41, which is active only during spore germination.

It catalyses the reaction Endopeptidase action with P4 Glu or Asp, P1 preferably Glu &gt; Asp, P1' hydrophobic and P2' Ala.. Functionally, initiates the rapid degradation of small, acid-soluble proteins during spore germination. This is Germination protease from Geobacillus sp. (strain WCH70).